The primary structure comprises 241 residues: Phycocyanobilin:ferredoxin oxidoreductase (241 aa).

Belongs to the HY2 family.

The catalysed reaction is (2R,3Z)-phycocyanobilin + 4 oxidized [2Fe-2S]-[ferredoxin] = biliverdin IXalpha + 4 reduced [2Fe-2S]-[ferredoxin] + 4 H(+). Its function is as follows. Catalyzes the four-electron reduction of biliverdin IX-alpha (2-electron reduction at both the A and D rings); the reaction proceeds via an isolatable 2-electron intermediate, 181,182-dihydrobiliverdin. The protein is Phycocyanobilin:ferredoxin oxidoreductase of Prochlorococcus marinus (strain MIT 9515).